The chain runs to 130 residues: Glycine cleavage system H protein (130 aa).

Positions 24-106 (TLTIGITDHA…YGEGWIMRIR (83 aa)) constitute a Lipoyl-binding domain. N6-lipoyllysine is present on Lys-65. A disordered region spans residues 111 to 130 (DDLEQLLDPEDYQDLVADEE).

It belongs to the GcvH family. The glycine cleavage system is composed of four proteins: P, T, L and H. (R)-lipoate is required as a cofactor.

In terms of biological role, the glycine cleavage system catalyzes the degradation of glycine. The H protein shuttles the methylamine group of glycine from the P protein to the T protein. This chain is Glycine cleavage system H protein, found in Alkalilimnicola ehrlichii (strain ATCC BAA-1101 / DSM 17681 / MLHE-1).